A 264-amino-acid chain; its full sequence is Thymidylate synthase (264 aa).

Residue Arg21 coordinates dUMP. His51 contacts (6R)-5,10-methylene-5,6,7,8-tetrahydrofolate. Residue 126–127 (RR) coordinates dUMP. Residue Cys146 is the Nucleophile of the active site. DUMP is bound by residues 166-169 (RSAD), Asn177, and 207-209 (HIY). Position 169 (Asp169) interacts with (6R)-5,10-methylene-5,6,7,8-tetrahydrofolate. Ala263 is a (6R)-5,10-methylene-5,6,7,8-tetrahydrofolate binding site.

This sequence belongs to the thymidylate synthase family. Bacterial-type ThyA subfamily. Homodimer.

It localises to the cytoplasm. It carries out the reaction dUMP + (6R)-5,10-methylene-5,6,7,8-tetrahydrofolate = 7,8-dihydrofolate + dTMP. It functions in the pathway pyrimidine metabolism; dTTP biosynthesis. Functionally, catalyzes the reductive methylation of 2'-deoxyuridine-5'-monophosphate (dUMP) to 2'-deoxythymidine-5'-monophosphate (dTMP) while utilizing 5,10-methylenetetrahydrofolate (mTHF) as the methyl donor and reductant in the reaction, yielding dihydrofolate (DHF) as a by-product. This enzymatic reaction provides an intracellular de novo source of dTMP, an essential precursor for DNA biosynthesis. The sequence is that of Thymidylate synthase from Coxiella burnetii (strain Dugway 5J108-111).